Consider the following 108-residue polypeptide: MTAHILLLWLFASSILGDPDSAGRLTRHQVSLKSGRLCSLGTCQTHRLPEIIYWLRSASTKELSGKAGRKPQDPYSYGRRRRRRRRRREARLLRRLQDPSLRRAQLAG.

Positions 1–18 are cleaved as a signal peptide; sequence MTAHILLLWLFASSILGD. Residues 19 to 25 constitute a propeptide that is removed on maturation; the sequence is PDSAGRL. A disulfide bond links cysteine 38 and cysteine 43. The tract at residues 61-108 is disordered; sequence KELSGKAGRKPQDPYSYGRRRRRRRRRREARLLRRLQDPSLRRAQLAG. Tyrosine 77 carries the post-translational modification Tyrosine amide. The segment covering 78–89 has biased composition (basic residues); sequence GRRRRRRRRRRE. Residues 89–108 constitute a propeptide that is removed on maturation; the sequence is EARLLRRLQDPSLRRAQLAG. Residues 90-101 are compositionally biased toward basic and acidic residues; the sequence is ARLLRRLQDPSL.

It belongs to the adrenomedullin family. Expressed abundantly in the spleen and thymus. Also expressed in adrenal and pituitary. Not expressed in brain, heart, kidney, liver and stomach.

It is found in the secreted. Its function is as follows. Seems to have a peripheral vasodepressor effect and a central vasopressor effect. This Sus scrofa (Pig) protein is ADM5 (ADM5).